We begin with the raw amino-acid sequence, 556 residues long: Zinc finger protein 18 (556 aa).

Residues 41–123 enclose the SCAN box domain; that stretch reads RQLFRQFRYQ…TLVESLKGDP (83 aa). Residues 169-195 are disordered; it reads QDLPLQNTSSAPGELLSHGVKEESDLE. The KRAB domain maps to 218-291; the sequence is EVGTALLPSL…HLHSAEKMAR (74 aa). 5 consecutive C2H2-type zinc fingers follow at residues 415 to 437, 443 to 465, 471 to 493, 499 to 521, and 527 to 549; these read PTCRECGKTFYRNSQLVFHQRTH, FHCRICKKAFLRSSDFVKHQRTH, CKCDYCGKGFSDFSGLRHHEKIH, YKCPICEKSFIQRSNFNRHQRVH, and YKCTHCGKRFSWSSSLDKHQRSH.

This sequence belongs to the krueppel C2H2-type zinc-finger protein family.

The protein resides in the nucleus. May be involved in transcriptional regulation. The chain is Zinc finger protein 18 (Znf18) from Rattus norvegicus (Rat).